Here is a 2581-residue protein sequence, read N- to C-terminus: Chromodomain-helicase-DNA-binding protein 8 (2581 aa).

Disordered regions lie at residues 22–114 (DDSF…QTST), 253–281 (VKGSAPAGNPGATGPPLKPAVTLTSTPAQ), and 349–375 (QKIQIVPQPPSSQPQPQPPPSAQPLTL). Composition is skewed to polar residues over residues 42–64 (SLDSLDQMNQDGGSGDVGNSSAS) and 94–114 (DYTTQPTSQEQPAQPVLQTST). A compositionally biased stretch (low complexity) spans 255–267 (GSAPAGNPGATGP). The span at 355-370 (PQPPSSQPQPQPPPSA) shows a compositional bias: pro residues. Position 432 is a phosphoserine (S432). Disordered stretches follow at residues 473–584 (RARG…KRKK) and 596–616 (DEEEEEVDVTGPIKPEPILPE). Over residues 493–516 (RPEEEGEKKRRKKSSGERLKEEKP) the composition is skewed to basic and acidic residues. 2 positions are modified to phosphoserine: S553 and S562. The segment covering 572–584 (QKRRSNRQVKRKK) has biased composition (basic residues). A Glycyl lysine isopeptide (Lys-Gly) (interchain with G-Cter in SUMO) cross-link involves residue K609. Chromo domains are found at residues 642 to 709 (AIVD…AQMR) and 724 to 790 (VEVD…RVNR). A Helicase ATP-binding domain is found at 823–997 (LFNWYNRQNC…FSLLHFLEPS (175 aa)). An ATP-binding site is contributed by 836–843 (DEMGLGKT). Positions 948-951 (DEAH) match the DEAH box motif. One can recognise a Helicase C-terminal domain in the interval 1137 to 1288 (LIDKLLPKLK…KAVLQSMSGR (152 aa)). Phosphoserine is present on residues S1420 and S1424. Residues 1692-1713 (EDPEYKPLQGPPKDPDDEGDPL) are disordered. The tract at residues 1789 to 2302 (IARREKQQRW…LVELEVECME (514 aa)) is interaction with FAM124B. Residues S1976 and S1978 each carry the phosphoserine modification. The tract at residues 1988-2016 (QCTSRTASPSPLRPDVPAEKSPEENAVQV) is disordered. T1993 carries the post-translational modification Phosphothreonine. S1995, S1997, and S2008 each carry phosphoserine. Residue K2025 forms a Glycyl lysine isopeptide (Lys-Gly) (interchain with G-Cter in SUMO2) linkage. Disordered stretches follow at residues 2047-2118 (SSDT…YDEE) and 2179-2221 (NRRS…SSSA). The segment covering 2063–2072 (EDDDDSDSEL) has biased composition (acidic residues). Phosphoserine occurs at positions 2068 and 2070. Residues 2075-2094 (SKLSPSSSSSSSSSSSSSSS) are compositionally biased toward low complexity. The span at 2102–2116 (EEKLTADRSRPKLYD) shows a compositional bias: basic and acidic residues. Residues S2182, S2200, and S2202 each carry the phosphoserine modification. T2204 bears the Phosphothreonine mark. The residue at position 2211 (S2211) is a Phosphoserine. T2215 carries the phosphothreonine modification. S2223 is subject to Phosphoserine. Residue K2256 forms a Glycyl lysine isopeptide (Lys-Gly) (interchain with G-Cter in SUMO2) linkage. A disordered region spans residues 2484–2581 (PHVDSSTMLH…NSDSSDDADD (98 aa)). The segment covering 2492 to 2510 (LHHHHHHPHPHHHHHHHPG) has biased composition (basic residues). A compositionally biased stretch (low complexity) spans 2513–2528 (TTGYPSSPATTTSGTA). Position 2519 is a phosphoserine (S2519). Residues 2537–2550 (EDDDEEEDEDDDDL) show a composition bias toward acidic residues. Over residues 2565-2574 (DDPMMPANSD) the composition is skewed to low complexity.

This sequence belongs to the SNF2/RAD54 helicase family. CHD8 subfamily. In terms of assembly, interacts with p53/TP53, histone H1 and CTCF. Component of some MLL1/MLL complex, at least composed of the core components KMT2A/MLL1, ASH2L, HCFC1/HCF1, WDR5 and RBBP5, as well as the facultative components BACC1, CHD8, E2F6, HSP70, INO80C, KANSL1, LAS1L, MAX, MCRS1, MGA, KAT8/MOF, PELP1, PHF20, PRP31, RING2, RUVB1/TIP49A, RUVB2/TIP49B, SENP3, TAF1, TAF4, TAF6, TAF7, TAF9 and TEX10. Interacts with CHD7. Interacts with FAM124B. Interacts with CTNNB1. Interacts with PIAS3. Interacts with TLK2. Interacts with HNRNPL in an RNA-dependent manner. In terms of processing, sumoylated.

It is found in the nucleus. It carries out the reaction ATP + H2O = ADP + phosphate + H(+). Functionally, ATP-dependent chromatin-remodeling factor, it slides nucleosomes along DNA; nucleosome sliding requires ATP. Acts as a transcription repressor by remodeling chromatin structure and recruiting histone H1 to target genes. Suppresses p53/TP53-mediated apoptosis by recruiting histone H1 and preventing p53/TP53 transactivation activity. Acts as a negative regulator of Wnt signaling pathway by regulating beta-catenin (CTNNB1) activity. Negatively regulates CTNNB1-targeted gene expression by being recruited specifically to the promoter regions of several CTNNB1 responsive genes. Involved in both enhancer blocking and epigenetic remodeling at chromatin boundary via its interaction with CTCF. Acts as a suppressor of STAT3 activity by suppressing the LIF-induced STAT3 transcriptional activity. Also acts as a transcription activator via its interaction with ZNF143 by participating in efficient U6 RNA polymerase III transcription. Regulates alternative splicing of a core group of genes involved in neuronal differentiation, cell cycle and DNA repair. Enables H3K36me3-coupled transcription elongation and co-transcriptional RNA processing likely via interaction with HNRNPL. The protein is Chromodomain-helicase-DNA-binding protein 8 of Rattus norvegicus (Rat).